The sequence spans 208 residues: FMN-dependent NADH:quinone oxidoreductase (208 aa).

Residues 17–19 (SNS), 99–102 (MWNL), and 143–146 (SRGG) contribute to the FMN site.

Belongs to the azoreductase type 1 family. In terms of assembly, homodimer. The cofactor is FMN.

It catalyses the reaction 2 a quinone + NADH + H(+) = 2 a 1,4-benzosemiquinone + NAD(+). The catalysed reaction is N,N-dimethyl-1,4-phenylenediamine + anthranilate + 2 NAD(+) = 2-(4-dimethylaminophenyl)diazenylbenzoate + 2 NADH + 2 H(+). Functionally, quinone reductase that provides resistance to thiol-specific stress caused by electrophilic quinones. In terms of biological role, also exhibits azoreductase activity. Catalyzes the reductive cleavage of the azo bond in aromatic azo compounds to the corresponding amines. The polypeptide is FMN-dependent NADH:quinone oxidoreductase (Staphylococcus aureus (strain MSSA476)).